We begin with the raw amino-acid sequence, 356 residues long: Peptide chain release factor 1 (356 aa).

The residue at position 233 (Q233) is an N5-methylglutamine.

It belongs to the prokaryotic/mitochondrial release factor family. Methylated by PrmC. Methylation increases the termination efficiency of RF1.

It is found in the cytoplasm. In terms of biological role, peptide chain release factor 1 directs the termination of translation in response to the peptide chain termination codons UAG and UAA. In Syntrophotalea carbinolica (strain DSM 2380 / NBRC 103641 / GraBd1) (Pelobacter carbinolicus), this protein is Peptide chain release factor 1.